Reading from the N-terminus, the 265-residue chain is MTTEDTLTIAGRSYQSRLLVGTGKYQDFAQTRAALDASGTQIVTVAIRRTNIGQNPDEPSLLDFVPPSQFTLLPNTAGCYSADDAVRTLRLARELLDGHDLVKLEVLGDPQNLFPNMPETLKATRTLVDEGFKVMVYCTDDPIQCRMLEDLGAVAVMPLASLIGSGMGILNPWNLRLIIDQSSVPVLVDAGVGTASDAAIAMELGCDGVLMNTAIAGARDPILMASAMRKAVEGGREAYLAGRVPRKLYSAAPSSPTEGLIAAVK.

The active-site Schiff-base intermediate with DXP is lysine 103. 1-deoxy-D-xylulose 5-phosphate is bound by residues glycine 164, 190 to 191, and 212 to 213; these read AG and NT.

It belongs to the ThiG family. As to quaternary structure, homotetramer. Forms heterodimers with either ThiH or ThiS.

It is found in the cytoplasm. It carries out the reaction [ThiS sulfur-carrier protein]-C-terminal-Gly-aminoethanethioate + 2-iminoacetate + 1-deoxy-D-xylulose 5-phosphate = [ThiS sulfur-carrier protein]-C-terminal Gly-Gly + 2-[(2R,5Z)-2-carboxy-4-methylthiazol-5(2H)-ylidene]ethyl phosphate + 2 H2O + H(+). The protein operates within cofactor biosynthesis; thiamine diphosphate biosynthesis. Catalyzes the rearrangement of 1-deoxy-D-xylulose 5-phosphate (DXP) to produce the thiazole phosphate moiety of thiamine. Sulfur is provided by the thiocarboxylate moiety of the carrier protein ThiS. In vitro, sulfur can be provided by H(2)S. In Bordetella bronchiseptica (strain ATCC BAA-588 / NCTC 13252 / RB50) (Alcaligenes bronchisepticus), this protein is Thiazole synthase.